We begin with the raw amino-acid sequence, 283 residues long: BTB/POZ domain-containing protein KCTD15 (283 aa).

The segment at 1-33 is disordered; sequence MPHRKERPSGSSLHAHGSTGTAEGGSMSRLSLT. A phosphoserine mark is found at serine 31, serine 35, and serine 38. Residues 56-126 enclose the BTB domain; that stretch reads APVHIDVGGH…LRTSKLLLPD (71 aa).

As to quaternary structure, forms oligomers, predominantly homopentamers. Interacts with KCTD1, probably forming heteropentamers depending on its abundance in a cell-type dependent manner. Interacts with TFAP2A; this interaction inhibits TFAP2A transcriptional activation.

Its subcellular location is the nucleus. In terms of biological role, during embryonic development, interferes with neural crest formation. Inhibits AP2 transcriptional activity by interaction with its activation domain. This is BTB/POZ domain-containing protein KCTD15 (KCTD15) from Bos taurus (Bovine).